The following is a 318-amino-acid chain: MNGDHMVLGSSVTDKKAIILVTILLLLRLVAIAGNGFITAALGVEWVLRRMLLPCDKLLVSLGASHFCLQSVVMGKTIYVFLYPMAFPYNPVLQFLAFQWDFLNAATLWFSTWLSVFYCVKIATFTHPVFFWLKHKLSGWLPWMVFSYVGLSSFTTILFFIGNHRMYQNYLKNHLQPWNVTGNSIRSYCEKFYLFPLKMITWTMPTAVFFICMILLITSLGRHMKKALLTTSGFREPSVQAHIKALLALLSFAMLFISYFLSLVFSAAGIFPPLDFKFWVWESVIYLCAAVHPIILLFSNCRLRAVLKSRRSSRCGTP.

The Extracellular segment spans residues 1–7; it reads MNGDHMV. A helical membrane pass occupies residues 8–28; that stretch reads LGSSVTDKKAIILVTILLLLR. Topologically, residues 29–40 are cytoplasmic; sequence LVAIAGNGFITA. A helical transmembrane segment spans residues 41–61; that stretch reads ALGVEWVLRRMLLPCDKLLVS. Residues 62–88 lie on the Extracellular side of the membrane; the sequence is LGASHFCLQSVVMGKTIYVFLYPMAFP. Residues 89–109 traverse the membrane as a helical segment; sequence YNPVLQFLAFQWDFLNAATLW. At 110–128 the chain is on the cytoplasmic side; that stretch reads FSTWLSVFYCVKIATFTHP. Residues 129-149 form a helical membrane-spanning segment; that stretch reads VFFWLKHKLSGWLPWMVFSYV. The Extracellular segment spans residues 150-183; the sequence is GLSSFTTILFFIGNHRMYQNYLKNHLQPWNVTGN. The N-linked (GlcNAc...) asparagine glycan is linked to Asn-179. A helical transmembrane segment spans residues 184–204; it reads SIRSYCEKFYLFPLKMITWTM. Topologically, residues 205 to 234 are cytoplasmic; it reads PTAVFFICMILLITSLGRHMKKALLTTSGF. A helical membrane pass occupies residues 235–255; it reads REPSVQAHIKALLALLSFAML. The Extracellular portion of the chain corresponds to 256 to 264; the sequence is FISYFLSLV. The helical transmembrane segment at 265–285 threads the bilayer; it reads FSAAGIFPPLDFKFWVWESVI. Residues 286-318 are Cytoplasmic-facing; the sequence is YLCAAVHPIILLFSNCRLRAVLKSRRSSRCGTP.

The protein belongs to the G-protein coupled receptor T2R family.

The protein resides in the membrane. In terms of biological role, receptor that may play a role in the perception of bitterness and is gustducin-linked. May play a role in sensing the chemical composition of the gastrointestinal content. The activity of this receptor may stimulate alpha gustducin, mediate PLC-beta-2 activation and lead to the gating of TRPM5. This is Taste receptor type 2 member 60 (TAS2R60) from Pan troglodytes (Chimpanzee).